The chain runs to 319 residues: Ribonuclease Z (319 aa).

Residues His-62, His-64, Asp-66, His-67, His-145, Asp-215, and His-273 each coordinate Zn(2+). The Proton acceptor role is filled by Asp-66.

It belongs to the RNase Z family. Homodimer. It depends on Zn(2+) as a cofactor.

It catalyses the reaction Endonucleolytic cleavage of RNA, removing extra 3' nucleotides from tRNA precursor, generating 3' termini of tRNAs. A 3'-hydroxy group is left at the tRNA terminus and a 5'-phosphoryl group is left at the trailer molecule.. Zinc phosphodiesterase, which displays some tRNA 3'-processing endonuclease activity. Probably involved in tRNA maturation, by removing a 3'-trailer from precursor tRNA. This chain is Ribonuclease Z, found in Borrelia duttonii (strain Ly).